An 82-amino-acid polypeptide reads, in one-letter code: Myosin light chain alkali (82 aa).

The region spanning 7 to 42 is the EF-hand domain; the sequence is GCYEDFIECLKLYDKEENGTMLLAELQHALLALGEN.

Myosin is a hexamer of 2 heavy chains and 4 light chains.

The polypeptide is Myosin light chain alkali (Mlc1) (Drosophila teissieri (Fruit fly)).